Reading from the N-terminus, the 217-residue chain is UPF0502 protein ESA_02280 (217 aa).

It belongs to the UPF0502 family.

In Cronobacter sakazakii (strain ATCC BAA-894) (Enterobacter sakazakii), this protein is UPF0502 protein ESA_02280.